The following is a 312-amino-acid chain: Ribosomal protein L11 methyltransferase (312 aa).

The S-adenosyl-L-methionine site is built by threonine 162, glycine 183, aspartate 205, and asparagine 248.

It belongs to the methyltransferase superfamily. PrmA family.

Its subcellular location is the cytoplasm. The catalysed reaction is L-lysyl-[protein] + 3 S-adenosyl-L-methionine = N(6),N(6),N(6)-trimethyl-L-lysyl-[protein] + 3 S-adenosyl-L-homocysteine + 3 H(+). Its function is as follows. Methylates ribosomal protein L11. This Bacillus cytotoxicus (strain DSM 22905 / CIP 110041 / 391-98 / NVH 391-98) protein is Ribosomal protein L11 methyltransferase.